We begin with the raw amino-acid sequence, 466 residues long: Trigger factor (466 aa).

The PPIase FKBP-type domain occupies 166–245 (GDFAQIDLVA…LNAVKERELP (80 aa)). 2 disordered regions span residues 313–332 (LEQESRLEDDEHRAEVTESS) and 424–466 (LPDD…AADK). Positions 426–444 (DDGEAVDEDATPEDTDAPA) are enriched in acidic residues. The segment covering 453-466 (PKKKAAAKKKAADK) has biased composition (basic residues).

It belongs to the FKBP-type PPIase family. Tig subfamily.

The protein localises to the cytoplasm. It catalyses the reaction [protein]-peptidylproline (omega=180) = [protein]-peptidylproline (omega=0). Its function is as follows. Involved in protein export. Acts as a chaperone by maintaining the newly synthesized protein in an open conformation. Functions as a peptidyl-prolyl cis-trans isomerase. In Leifsonia xyli subsp. xyli (strain CTCB07), this protein is Trigger factor.